A 105-amino-acid polypeptide reads, in one-letter code: Thiosulfate sulfurtransferase GlpE (105 aa).

The 89-residue stretch at 15 to 103 (MQQGAILVDI…WCRAELPIDT (89 aa)) folds into the Rhodanese domain. The active-site Cysteine persulfide intermediate is the C63.

It belongs to the GlpE family.

The protein resides in the cytoplasm. The catalysed reaction is thiosulfate + hydrogen cyanide = thiocyanate + sulfite + 2 H(+). The enzyme catalyses thiosulfate + [thioredoxin]-dithiol = [thioredoxin]-disulfide + hydrogen sulfide + sulfite + 2 H(+). Its function is as follows. Transferase that catalyzes the transfer of sulfur from thiosulfate to thiophilic acceptors such as cyanide or dithiols. May function in a CysM-independent thiosulfate assimilation pathway by catalyzing the conversion of thiosulfate to sulfite, which can then be used for L-cysteine biosynthesis. This Haemophilus influenzae (strain 86-028NP) protein is Thiosulfate sulfurtransferase GlpE.